A 651-amino-acid polypeptide reads, in one-letter code: ATP-dependent RNA helicase DBP6 (651 aa).

Residues 1–114 (MFAARFDPTK…ADVDDDGKHT (114 aa)) form a disordered region. A compositionally biased stretch (basic and acidic residues) spans 7–17 (DPTKVVREEPK). The segment covering 27–42 (DDVESSDSDQDIEDGV) has biased composition (acidic residues). The segment covering 49 to 60 (KEQSGTDVTTTR) has biased composition (polar residues). Residues 69–85 (DSESESESESDSDDEMN) are compositionally biased toward acidic residues. Residues 100–113 (VSSKDADVDDDGKH) are compositionally biased toward basic and acidic residues. The Q motif motif lies at 216–224 (TFPIQTAML). Residues 240–420 (KNFTRRIGDI…DLQLYNPTLF (181 aa)) form the Helicase ATP-binding domain. 253 to 260 (ASTGSGKT) is an ATP binding site. Residues 360–363 (DEAD) carry the DEAD box motif. One can recognise a Helicase C-terminal domain in the interval 452–611 (YLLKLLEQLS…CKPISYNDSY (160 aa)).

This sequence belongs to the DEAD box helicase family. DDX51/DBP6 subfamily. Associated with pre-ribosomal particles.

It is found in the nucleus. The protein localises to the nucleolus. It carries out the reaction ATP + H2O = ADP + phosphate + H(+). In terms of biological role, ATP-binding RNA helicase involved in the biogenesis of 60S ribosomal subunits and is required for the normal formation of 25S and 5.8S rRNAs. This is ATP-dependent RNA helicase DBP6 (DBP6) from Candida glabrata (strain ATCC 2001 / BCRC 20586 / JCM 3761 / NBRC 0622 / NRRL Y-65 / CBS 138) (Yeast).